Reading from the N-terminus, the 252-residue chain is MNKFLIIDGMNLVRRIHAAQPNESDITGLKERVNGACRKLLKFHQPSHAAIVWDGDAISWRKALFEDYKKGRKPMPEALANGLVELKAYLAEHQLNSINADSEADDVIATLATKLTSINGEAIIVSTDKGFCQLSHPNIKRWDHFNQGYLTIEEMEKKLGVESTQFIDYLALAGDSGNKIPGVPGIGPKSAVELLKIFRSLANIYNSIDKVGSKQAKKLEEGKQMARLSYKLVQLQTDLPLNVNLKQFRIEQ.

A Mg(2+)-binding site is contributed by aspartate 105. A 5'-3' exonuclease domain is found at valine 161 to glutamate 251. 5 residues coordinate K(+): leucine 172, alanine 173, proline 181, valine 183, and isoleucine 186. Positions glycine 185 to serine 190 are interaction with DNA.

The protein belongs to the Xni family. Requires Mg(2+) as cofactor. It depends on K(+) as a cofactor.

Functionally, has flap endonuclease activity. During DNA replication, flap endonucleases cleave the 5'-overhanging flap structure that is generated by displacement synthesis when DNA polymerase encounters the 5'-end of a downstream Okazaki fragment. The sequence is that of Flap endonuclease Xni from Shewanella halifaxensis (strain HAW-EB4).